Reading from the N-terminus, the 111-residue chain is Aspartate 1-decarboxylase (111 aa).

Serine 25 (schiff-base intermediate with substrate; via pyruvic acid) is an active-site residue. Position 25 is a pyruvic acid (Ser) (serine 25). Residue threonine 57 participates in substrate binding. The active-site Proton donor is the tyrosine 58. 73 to 75 (GPA) is a binding site for substrate.

This sequence belongs to the PanD family. Heterooctamer of four alpha and four beta subunits. It depends on pyruvate as a cofactor. Post-translationally, is synthesized initially as an inactive proenzyme, which is activated by self-cleavage at a specific serine bond to produce a beta-subunit with a hydroxyl group at its C-terminus and an alpha-subunit with a pyruvoyl group at its N-terminus.

Its subcellular location is the cytoplasm. The catalysed reaction is L-aspartate + H(+) = beta-alanine + CO2. The protein operates within cofactor biosynthesis; (R)-pantothenate biosynthesis; beta-alanine from L-aspartate: step 1/1. Catalyzes the pyruvoyl-dependent decarboxylation of aspartate to produce beta-alanine. The chain is Aspartate 1-decarboxylase from Coxiella burnetii (strain RSA 493 / Nine Mile phase I).